Here is a 91-residue protein sequence, read N- to C-terminus: Small ribosomal subunit protein uS15 (91 aa).

This sequence belongs to the universal ribosomal protein uS15 family. As to quaternary structure, part of the 30S ribosomal subunit. Forms a bridge to the 50S subunit in the 70S ribosome, contacting the 23S rRNA.

Functionally, one of the primary rRNA binding proteins, it binds directly to 16S rRNA where it helps nucleate assembly of the platform of the 30S subunit by binding and bridging several RNA helices of the 16S rRNA. Forms an intersubunit bridge (bridge B4) with the 23S rRNA of the 50S subunit in the ribosome. This is Small ribosomal subunit protein uS15 from Synechococcus sp. (strain JA-3-3Ab) (Cyanobacteria bacterium Yellowstone A-Prime).